The sequence spans 513 residues: uncharacterized protein (513 aa).

Residues 1 to 16 (MPREHDSKYHRERDMR) are compositionally biased toward basic and acidic residues. A disordered region spans residues 1–21 (MPREHDSKYHRERDMRSGLQE).

This is an uncharacterized protein from Sinorhizobium fredii (strain NBRC 101917 / NGR234).